The primary structure comprises 47 residues: Large ribosomal subunit protein bL36B (47 aa).

The protein belongs to the bacterial ribosomal protein bL36 family.

The protein is Large ribosomal subunit protein bL36B of Pectobacterium atrosepticum (strain SCRI 1043 / ATCC BAA-672) (Erwinia carotovora subsp. atroseptica).